A 360-amino-acid chain; its full sequence is MEGNGCGGSGATPRGVVGMHWAPVVTSPPSPQPPFLPPAPCRPDVQMQQQGGLTCLKLGKRPCFWGGDGAGQVAQGSGGGGGGGGGGSADQGKRKEKAATAVPVVPRCQVEGCDITLQGVKEYHRRHKVCEVHAKAPRVVVHGTEQRFCQQCSRFHVLAEFDDAKKSCRRRLAGHNERRRRSNASEAMARGSAHPHGMPVLGHGFPPYGLPTSSAGALSLLSSARATGPWLMPTPDISARSSAALDELIAENRAALLSWQFFSDRQPPPAGRPTGRSPGSETAGGWHAHLQARPPPPGAGGQHEHQSGHVTLDLMQATTAAGGSGAPFRPVPARPAKEGGDAGCTSDAWTPSPMEGARVV.

A compositionally biased stretch (gly residues) spans A74 to A89. Residues A74 to A98 are disordered. The segment at V105–S182 adopts an SBP-type zinc-finger fold. Residues C108, C113, C130, H133, C149, C152, H156, and C168 each coordinate Zn(2+). Positions K165–R181 match the Bipartite nuclear localization signal motif. Residues L172 to S182 show a composition bias toward basic residues. Disordered stretches follow at residues L172–H196, F261–Q306, and A320–V360.

Expressed in young panicles.

The protein resides in the nucleus. Its function is as follows. Trans-acting factor that binds specifically to the consensus nucleotide sequence 5'-TNCGTACAA-3'. May be involved in panicle development. In Oryza sativa subsp. indica (Rice), this protein is Squamosa promoter-binding-like protein 7 (SPL7).